Here is a 1204-residue protein sequence, read N- to C-terminus: Cingulin (1204 aa).

A head region spans residues 7-359 (MAEPRGPVDH…VMMSSGSSKA (353 aa)). Residues 25-48 (EPVSGAEMGTLRRGGRRPAKDARA) are disordered. A ZIM motif is present at residues 48–62 (ASTYGVAVRVQGIAG). Positions 54-67 (AVRVQGIAGQPFVV) are interaction with TJP1/ZO1. Residues 68–269 (LNSGEKGGDS…SPLSGLSRAR (202 aa)) form a disordered region. 8 positions are modified to phosphoserine: Ser-95, Ser-96, Ser-98, Ser-135, Ser-137, Ser-140, Ser-155, and Ser-165. Polar residues predominate over residues 126-140 (TQWNGKLLRSQSQAS). Residues 166 to 190 (PGSTIDTAPLSSVDSLINKFDSQLR) show a composition bias toward polar residues. Over residues 207–231 (EQRKRSKSLDSRLPRDTLEERERQS) the composition is skewed to basic and acidic residues. Ser-214, Ser-217, Ser-260, Ser-278, Ser-340, and Ser-353 each carry phosphoserine. Positions 360-1161 (VAGQGELTRK…SLEKDSWRKA (802 aa)) form a coiled coil. N6-acetyllysine is present on Lys-581. Positions 1156–1182 (DSWRKASRSAAESTLKHEGLSSDEEFD) are disordered. A tail region spans residues 1162–1204 (SRSAAESTLKHEGLSSDEEFDGVYDPSSIASLLTESNLQTSSC). A phosphoserine mark is found at Ser-1176 and Ser-1177.

The protein belongs to the cingulin family. In terms of assembly, homodimer. Interacts with TJP1/ZO1 and SPEF1.

It is found in the cell junction. The protein localises to the tight junction. In terms of biological role, probably plays a role in the formation and regulation of the tight junction (TJ) paracellular permeability barrier. The protein is Cingulin of Callithrix jacchus (White-tufted-ear marmoset).